The sequence spans 484 residues: Replication factor C large subunit (484 aa).

Gly-46 to Thr-53 is a binding site for ATP. Residues Asn-463–Ala-478 are compositionally biased toward basic and acidic residues. Residues Asn-463–Phe-484 form a disordered region.

Belongs to the activator 1 small subunits family. RfcL subfamily. Heteromultimer composed of small subunits (RfcS) and large subunits (RfcL).

In terms of biological role, part of the RFC clamp loader complex which loads the PCNA sliding clamp onto DNA. In Methanococcus maripaludis (strain C6 / ATCC BAA-1332), this protein is Replication factor C large subunit.